A 428-amino-acid chain; its full sequence is C4-dicarboxylate transport protein (428 aa).

Transmembrane regions (helical) follow at residues 8–28, 44–64, 78–98, 148–168, 184–204, 222–242, 307–327, and 355–375; these read VLYV…HLYP, LIKM…IAGM, LLYF…ATHI, GEIL…AHLG, VLFG…FGAM, LIGT…GAIA, IYMT…LTWM, and AATL…ILGI.

The protein belongs to the dicarboxylate/amino acid:cation symporter (DAACS) (TC 2.A.23) family.

The protein resides in the cell inner membrane. Functionally, responsible for the transport of dicarboxylates such as succinate, fumarate, and malate from the periplasm across the membrane. This chain is C4-dicarboxylate transport protein, found in Burkholderia thailandensis (strain ATCC 700388 / DSM 13276 / CCUG 48851 / CIP 106301 / E264).